We begin with the raw amino-acid sequence, 437 residues long: Nicotinate phosphoribosyltransferase (437 aa).

H231 is modified (phosphohistidine; by autocatalysis).

Belongs to the NAPRTase family. Transiently phosphorylated on a His residue during the reaction cycle. Phosphorylation strongly increases the affinity for substrates and increases the rate of nicotinate D-ribonucleotide production. Dephosphorylation regenerates the low-affinity form of the enzyme, leading to product release.

The enzyme catalyses nicotinate + 5-phospho-alpha-D-ribose 1-diphosphate + ATP + H2O = nicotinate beta-D-ribonucleotide + ADP + phosphate + diphosphate. It functions in the pathway cofactor biosynthesis; NAD(+) biosynthesis; nicotinate D-ribonucleotide from nicotinate: step 1/1. Catalyzes the synthesis of beta-nicotinate D-ribonucleotide from nicotinate and 5-phospho-D-ribose 1-phosphate at the expense of ATP. In Vibrio vulnificus (strain CMCP6), this protein is Nicotinate phosphoribosyltransferase.